Consider the following 210-residue polypeptide: Probable nicotinate-nucleotide adenylyltransferase (210 aa).

The protein belongs to the NadD family.

It catalyses the reaction nicotinate beta-D-ribonucleotide + ATP + H(+) = deamido-NAD(+) + diphosphate. It functions in the pathway cofactor biosynthesis; NAD(+) biosynthesis; deamido-NAD(+) from nicotinate D-ribonucleotide: step 1/1. Its function is as follows. Catalyzes the reversible adenylation of nicotinate mononucleotide (NaMN) to nicotinic acid adenine dinucleotide (NaAD). This chain is Probable nicotinate-nucleotide adenylyltransferase, found in Streptococcus pyogenes serotype M3 (strain ATCC BAA-595 / MGAS315).